The sequence spans 212 residues: MSDEQSTPASGRPPRQSRGGLTSTGARKAASKSNRSRAREFALQALYQHLVGGNDVEAIDRFTRDLSGFHKADSVHYDALLRGCINSQVDLDALIAPKLDRTMAEISPIEHASMWIGVYEFQHCPDVPWRVVLNECIELAKEFGGTDGHKYVNAVLNGLAPTLRAAEVEHDRAGKGSAPAQPAAKADTATDAVADAATDAAAADDAADQAAG.

Disordered regions lie at residues 1 to 34 (MSDEQSTPASGRPPRQSRGGLTSTGARKAASKSN) and 169 to 212 (EHDR…QAAG). The span at 178–212 (APAQPAAKADTATDAVADAATDAAAADDAADQAAG) shows a compositional bias: low complexity.

The protein belongs to the NusB family.

Functionally, involved in transcription antitermination. Required for transcription of ribosomal RNA (rRNA) genes. Binds specifically to the boxA antiterminator sequence of the ribosomal RNA (rrn) operons. The polypeptide is Transcription antitermination protein NusB (Delftia acidovorans (strain DSM 14801 / SPH-1)).